A 660-amino-acid chain; its full sequence is Pescadillo homolog (660 aa).

Disordered stretches follow at residues 313–358 (VESD…SYSS) and 471–660 (PELY…EKKA). The span at 331–342 (EEKPSDAIDKFE) shows a compositional bias: basic and acidic residues. The BRCT domain occupies 360 to 476 (DPAQLFSRLT…ELKSPELYGP (117 aa)). A coiled-coil region spans residues 501-659 (LEEQQSEGEA…KRRRLEKEKK (159 aa)). The segment covering 504–566 (QQSEGEAIDA…EEGSEDEEES (63 aa)) has biased composition (acidic residues). The segment covering 584–619 (VKGDKKMDAKTKAKLEAKKALERKKKSEAEDLERAK) has biased composition (basic and acidic residues).

The protein belongs to the pescadillo family. In terms of assembly, component of the NOP7 complex, composed of ERB1, NOP7 and YTM1. The complex is held together by ERB1, which interacts with NOP7 via its N-terminal domain and with YTM1 via a high-affinity interaction between the seven-bladed beta-propeller domains of the 2 proteins. The NOP7 complex associates with the 66S pre-ribosome.

The protein localises to the nucleus. The protein resides in the nucleolus. It localises to the nucleoplasm. Functionally, component of the NOP7 complex, which is required for maturation of the 25S and 5.8S ribosomal RNAs and formation of the 60S ribosome. The chain is Pescadillo homolog from Chaetomium globosum (strain ATCC 6205 / CBS 148.51 / DSM 1962 / NBRC 6347 / NRRL 1970) (Soil fungus).